A 192-amino-acid chain; its full sequence is MTEYILLLVGTVLVNNFVLVKFLGLCPFMGVSKKLETAIGMGLATTFVLTLASVCAYLVESYVLRPLGIEYLRTMSFILVIAVVVQFTEMVVHKTSPTLYRLLGIFLPLITTNCAVLGVALLNINENHNFIESIIYGFGAAVGFSLVLILFASMRERIAAADVPVPFRGASIAMITAGLMSLAFMGFTGLVK.

6 helical membrane-spanning segments follow: residues I5–L25, I39–V59, L67–F87, L102–L122, I134–M154, and S171–V191.

It belongs to the NqrDE/RnfAE family. As to quaternary structure, the complex is composed of six subunits: RnfA, RnfB, RnfC, RnfD, RnfE and RnfG.

The protein resides in the cell inner membrane. Functionally, part of a membrane-bound complex that couples electron transfer with translocation of ions across the membrane. This chain is Ion-translocating oxidoreductase complex subunit A, found in Vibrio campbellii (strain ATCC BAA-1116).